Reading from the N-terminus, the 420-residue chain is Glucose-1-phosphate adenylyltransferase (420 aa).

Alpha-D-glucose 1-phosphate-binding positions include Y107, G172, 187–188 (EK), and S205.

Belongs to the bacterial/plant glucose-1-phosphate adenylyltransferase family. In terms of assembly, homotetramer.

The catalysed reaction is alpha-D-glucose 1-phosphate + ATP + H(+) = ADP-alpha-D-glucose + diphosphate. It functions in the pathway glycan biosynthesis; glycogen biosynthesis. Involved in the biosynthesis of ADP-glucose, a building block required for the elongation reactions to produce glycogen. Catalyzes the reaction between ATP and alpha-D-glucose 1-phosphate (G1P) to produce pyrophosphate and ADP-Glc. This chain is Glucose-1-phosphate adenylyltransferase, found in Rhizobium meliloti (strain 1021) (Ensifer meliloti).